Here is a 57-residue protein sequence, read N- to C-terminus: uncharacterized protein (57 aa).

This is an uncharacterized protein from Archaeoglobus fulgidus (strain ATCC 49558 / DSM 4304 / JCM 9628 / NBRC 100126 / VC-16).